We begin with the raw amino-acid sequence, 215 residues long: 16S rRNA (adenine(1408)-N(1))-methyltransferase (215 aa).

S-adenosyl-L-methionine is bound by residues Gly32, Asp55, 87-88, 102-107, and 191-193; these read AE, LMPWGS, and TSW.

This sequence belongs to the methyltransferase superfamily. Kanamycin-apramycin resistance family.

It carries out the reaction adenosine(1408) in 16S rRNA + S-adenosyl-L-methionine = N(1)-methyladenosine(1408) in 16S rRNA + S-adenosyl-L-homocysteine + H(+). Specifically methylates the N(1) position of adenine 1408 in 16S rRNA. Confers resistance to various aminoglycosides. This is 16S rRNA (adenine(1408)-N(1))-methyltransferase (kamB) from Streptoalloteichus hindustanus.